Consider the following 341-residue polypeptide: Phosphate acyltransferase (341 aa).

Belongs to the PlsX family. Homodimer. Probably interacts with PlsY.

The protein resides in the cytoplasm. The enzyme catalyses a fatty acyl-[ACP] + phosphate = an acyl phosphate + holo-[ACP]. Its pathway is lipid metabolism; phospholipid metabolism. Catalyzes the reversible formation of acyl-phosphate (acyl-PO(4)) from acyl-[acyl-carrier-protein] (acyl-ACP). This enzyme utilizes acyl-ACP as fatty acyl donor, but not acyl-CoA. The polypeptide is Phosphate acyltransferase (Chlorobaculum parvum (strain DSM 263 / NCIMB 8327) (Chlorobium vibrioforme subsp. thiosulfatophilum)).